Consider the following 180-residue polypeptide: ATP synthase subunit delta (180 aa).

The protein belongs to the ATPase delta chain family. As to quaternary structure, F-type ATPases have 2 components, F(1) - the catalytic core - and F(0) - the membrane proton channel. F(1) has five subunits: alpha(3), beta(3), gamma(1), delta(1), epsilon(1). F(0) has three main subunits: a(1), b(2) and c(10-14). The alpha and beta chains form an alternating ring which encloses part of the gamma chain. F(1) is attached to F(0) by a central stalk formed by the gamma and epsilon chains, while a peripheral stalk is formed by the delta and b chains.

The protein resides in the cell membrane. Its function is as follows. F(1)F(0) ATP synthase produces ATP from ADP in the presence of a proton or sodium gradient. F-type ATPases consist of two structural domains, F(1) containing the extramembraneous catalytic core and F(0) containing the membrane proton channel, linked together by a central stalk and a peripheral stalk. During catalysis, ATP synthesis in the catalytic domain of F(1) is coupled via a rotary mechanism of the central stalk subunits to proton translocation. In terms of biological role, this protein is part of the stalk that links CF(0) to CF(1). It either transmits conformational changes from CF(0) to CF(1) or is implicated in proton conduction. This Bacillus cereus (strain B4264) protein is ATP synthase subunit delta.